We begin with the raw amino-acid sequence, 287 residues long: UPF0098 protein AF_1698 (287 aa).

The protein belongs to the UPF0098 family.

The polypeptide is UPF0098 protein AF_1698 (Archaeoglobus fulgidus (strain ATCC 49558 / DSM 4304 / JCM 9628 / NBRC 100126 / VC-16)).